A 797-amino-acid polypeptide reads, in one-letter code: Outer membrane protein assembly factor BamA (797 aa).

A signal peptide spans 1-19 (MKKLLIASLLFGTTTTVFA). 5 POTRA domains span residues 22 to 89 (FVAK…VVAK), 90 to 170 (SIIS…INED), 173 to 259 (AKLA…VNEG), 262 to 341 (YDLR…VDAG), and 344 to 418 (LTVR…VKER).

Belongs to the BamA family. Part of the Bam complex.

The protein localises to the cell outer membrane. Its function is as follows. Part of the outer membrane protein assembly complex, which is involved in assembly and insertion of beta-barrel proteins into the outer membrane. In Haemophilus influenzae, this protein is Outer membrane protein assembly factor BamA.